Consider the following 436-residue polypeptide: Anaerobic glycerol-3-phosphate dehydrogenase subunit B (436 aa).

Belongs to the anaerobic G-3-P dehydrogenase subunit B family. In terms of assembly, composed of a catalytic GlpA/B dimer and of membrane bound GlpC. Requires FMN as cofactor.

The enzyme catalyses a quinone + sn-glycerol 3-phosphate = dihydroxyacetone phosphate + a quinol. It participates in polyol metabolism; glycerol degradation via glycerol kinase pathway; glycerone phosphate from sn-glycerol 3-phosphate (anaerobic route): step 1/1. Conversion of glycerol 3-phosphate to dihydroxyacetone. Uses fumarate or nitrate as electron acceptor. The protein is Anaerobic glycerol-3-phosphate dehydrogenase subunit B of Vibrio cholerae serotype O1 (strain M66-2).